We begin with the raw amino-acid sequence, 94 residues long: CRISPR-associated endoribonuclease Cas2 (94 aa).

A Mg(2+)-binding site is contributed by aspartate 11.

The protein belongs to the CRISPR-associated endoribonuclease Cas2 protein family. Homodimer, forms a heterotetramer with a Cas1 homodimer. The cofactor is Mg(2+).

Its function is as follows. CRISPR (clustered regularly interspaced short palindromic repeat), is an adaptive immune system that provides protection against mobile genetic elements (viruses, transposable elements and conjugative plasmids). CRISPR clusters contain sequences complementary to antecedent mobile elements and target invading nucleic acids. CRISPR clusters are transcribed and processed into CRISPR RNA (crRNA). Functions as a ssRNA-specific endoribonuclease. Involved in the integration of spacer DNA into the CRISPR cassette. The sequence is that of CRISPR-associated endoribonuclease Cas2 from Allochromatium vinosum (strain ATCC 17899 / DSM 180 / NBRC 103801 / NCIMB 10441 / D) (Chromatium vinosum).